The chain runs to 299 residues: Probable lipid kinase YegS-like (299 aa).

One can recognise a DAGKc domain in the interval 2-133 (EKNPITLLIL…IDIAKVNDGH (132 aa)). Residues Thr40, 66–72 (GDGTVNE), and Thr95 contribute to the ATP site. The Mg(2+) site is built by Leu215, Asp218, and Leu220. Glu271 serves as the catalytic Proton acceptor.

Belongs to the diacylglycerol/lipid kinase family. YegS lipid kinase subfamily. The cofactor is Mg(2+). It depends on Ca(2+) as a cofactor.

The protein localises to the cytoplasm. Probably phosphorylates lipids; the in vivo substrate is unknown. This is Probable lipid kinase YegS-like from Pectobacterium atrosepticum (strain SCRI 1043 / ATCC BAA-672) (Erwinia carotovora subsp. atroseptica).